The sequence spans 81 residues: Putative defensin-like protein 25 (81 aa).

Positions 1–23 are cleaved as a signal peptide; that stretch reads MASLKVFSFALILVLTFSVDVEG. 4 disulfide bridges follow: C33-C81, C43-C68, C52-C77, and C56-C79.

The protein belongs to the DEFL family.

It is found in the secreted. In Arabidopsis thaliana (Mouse-ear cress), this protein is Putative defensin-like protein 25.